A 212-amino-acid polypeptide reads, in one-letter code: NAD(P)H-hydrate epimerase (212 aa).

Residues 11-212 enclose the YjeF N-terminal domain; the sequence is MRHYDFYTIN…ANDMGTYAVD (202 aa). 60–64 contributes to the (6S)-NADPHX binding site; the sequence is NNGGD. Residues Asn61 and Asp123 each contribute to the K(+) site. (6S)-NADPHX is bound by residues 127–133, Tyr138, and Asp156; that span reads GIGIDRA. K(+) is bound at residue Ser159.

The protein belongs to the NnrE/AIBP family. It depends on K(+) as a cofactor.

The catalysed reaction is (6R)-NADHX = (6S)-NADHX. The enzyme catalyses (6R)-NADPHX = (6S)-NADPHX. Its function is as follows. Catalyzes the epimerization of the S- and R-forms of NAD(P)HX, a damaged form of NAD(P)H that is a result of enzymatic or heat-dependent hydration. This is a prerequisite for the S-specific NAD(P)H-hydrate dehydratase to allow the repair of both epimers of NAD(P)HX. This chain is NAD(P)H-hydrate epimerase, found in Limosilactobacillus reuteri (strain DSM 20016) (Lactobacillus reuteri).